The sequence spans 167 residues: NAD(P)H-quinone oxidoreductase subunit I, chloroplastic (167 aa).

2 4Fe-4S ferredoxin-type domains span residues 55–84 and 95–124; these read GRIHFEFDKCIACEVCVRVCPIDLPVVDWK and LNYSIDFGICIFCGNCVEYCPTNCLSMTEE. 8 residues coordinate [4Fe-4S] cluster: Cys-64, Cys-67, Cys-70, Cys-74, Cys-104, Cys-107, Cys-110, and Cys-114.

It belongs to the complex I 23 kDa subunit family. NDH is composed of at least 16 different subunits, 5 of which are encoded in the nucleus. Requires [4Fe-4S] cluster as cofactor.

It localises to the plastid. The protein resides in the chloroplast thylakoid membrane. The enzyme catalyses a plastoquinone + NADH + (n+1) H(+)(in) = a plastoquinol + NAD(+) + n H(+)(out). It catalyses the reaction a plastoquinone + NADPH + (n+1) H(+)(in) = a plastoquinol + NADP(+) + n H(+)(out). Functionally, NDH shuttles electrons from NAD(P)H:plastoquinone, via FMN and iron-sulfur (Fe-S) centers, to quinones in the photosynthetic chain and possibly in a chloroplast respiratory chain. The immediate electron acceptor for the enzyme in this species is believed to be plastoquinone. Couples the redox reaction to proton translocation, and thus conserves the redox energy in a proton gradient. The polypeptide is NAD(P)H-quinone oxidoreductase subunit I, chloroplastic (Morus indica (Mulberry)).